The chain runs to 413 residues: Alpha-1-antitrypsin 1-1 (413 aa).

A signal peptide spans 1 to 24; it reads MTPSISWGLLLLAGLCCLVPSFLA. 3 N-linked (GlcNAc...) asparagine glycosylation sites follow: Asn64, Asn101, and Asn265. The interval 368 to 387 is RCL; it reads AVTVLQMVPMSMPPILRFDH.

It belongs to the serpin family.

It localises to the secreted. Its function is as follows. Inhibitor of serine proteases. Its primary target is elastase, but it also has a moderate affinity for plasmin and thrombin. This is Alpha-1-antitrypsin 1-1 (Serpina1a) from Mus musculus (Mouse).